The following is a 451-amino-acid chain: MLFRSLVTYLSLVSSVLSIASIKVEGNAFWDSESGDRFYIRGVDYQPGGSSELEDPLADTNVCERDVKYFQELGINTIRVYSIDNTKNHTECMDTLAKAGIYVILDVNTPHSSITRSDAACSYNTDYLQEVFASIVEFAQFDNTLGFFAGNEVINDGPSLEAAPYVKAVVRDMKTFIKNRGFRTIPVGYSAASVDEYRLPSGLYFNCGDDDMARIDMYGINDYSWCGDASMTTSQYSQQMKDFANYTVPLFFSEFGCNAKRPRPFSEIEAIYSTEMSSVFSGGLVYEYSEEASNYGLVELKGDSVTTNDDFDNLKSQFEKTKNPSGDGGYLKSTGGNKCPPKSNIWNVTEEIPDTPKGALKYLKGLAEPTGHGFDAYVQGNCNAKGNNVDDTGNYTSSITASSRASPSQTSQVSSSSATSANSTSSKKNDAAVEGAGFLSVIALAAGIALL.

The N-terminal stretch at 1–18 is a signal peptide; sequence MLFRSLVTYLSLVSSVLS. Residue Tyr-81 coordinates (1,3-beta-D-glucosyl)n. Asn-88 carries an N-linked (GlcNAc...) asparagine glycan. Residues 108–116, Asn-151, Glu-152, and Arg-198 contribute to the (1,3-beta-D-glucosyl)n site; that span reads NTPHSSITR. The Proton donor role is filled by Glu-152. Residue Asn-245 is glycosylated (N-linked (GlcNAc...) asparagine). The active-site Nucleophile is Glu-254. (1,3-beta-D-glucosyl)n is bound at residue Tyr-286. Residues 316–336 form a disordered region; that stretch reads SQFEKTKNPSGDGGYLKSTGG. Residues Asn-347, Asn-394, and Asn-422 are each glycosylated (N-linked (GlcNAc...) asparagine). The segment at 395-427 is disordered; sequence YTSSITASSRASPSQTSQVSSSSATSANSTSSK. Residues 396 to 426 are compositionally biased toward low complexity; sequence TSSITASSRASPSQTSQVSSSSATSANSTSS. Asp-430 is lipidated: GPI-anchor amidated aspartate. A propeptide spans 431 to 451 (removed in mature form); the sequence is AAVEGAGFLSVIALAAGIALL.

This sequence belongs to the glycosyl hydrolase 72 family. In terms of processing, the GPI-anchor is attached to the protein in the endoplasmic reticulum and serves to target the protein to the cell surface. There, the glucosamine-inositol phospholipid moiety is cleaved off and the GPI-modified mannoprotein is covalently attached via its lipidless GPI glycan remnant to the 1,6-beta-glucan of the outer cell wall layer.

It is found in the secreted. It localises to the cell wall. Its subcellular location is the membrane. Functionally, splits internally a 1,3-beta-glucan molecule and transfers the newly generated reducing end (the donor) to the non-reducing end of another 1,3-beta-glucan molecule (the acceptor) forming a 1,3-beta linkage, resulting in the elongation of 1,3-beta-glucan chains in the cell wall. Involved in cell wall biosynthesis and morphogenesis. Plays a key role in virulence. This Candida albicans (strain SC5314 / ATCC MYA-2876) (Yeast) protein is 1,3-beta-glucanosyltransferase PGA4 (PGA4).